The primary structure comprises 417 residues: Serine hydroxymethyltransferase (417 aa).

(6S)-5,6,7,8-tetrahydrofolate contacts are provided by residues leucine 121 and 125 to 127; that span reads GHL. Lysine 229 is modified (N6-(pyridoxal phosphate)lysine). 355 to 357 lines the (6S)-5,6,7,8-tetrahydrofolate pocket; that stretch reads SPF.

Belongs to the SHMT family. Homodimer. Pyridoxal 5'-phosphate is required as a cofactor.

It is found in the cytoplasm. It catalyses the reaction (6R)-5,10-methylene-5,6,7,8-tetrahydrofolate + glycine + H2O = (6S)-5,6,7,8-tetrahydrofolate + L-serine. It functions in the pathway one-carbon metabolism; tetrahydrofolate interconversion. It participates in amino-acid biosynthesis; glycine biosynthesis; glycine from L-serine: step 1/1. Functionally, catalyzes the reversible interconversion of serine and glycine with tetrahydrofolate (THF) serving as the one-carbon carrier. This reaction serves as the major source of one-carbon groups required for the biosynthesis of purines, thymidylate, methionine, and other important biomolecules. Also exhibits THF-independent aldolase activity toward beta-hydroxyamino acids, producing glycine and aldehydes, via a retro-aldol mechanism. The sequence is that of Serine hydroxymethyltransferase from Erwinia tasmaniensis (strain DSM 17950 / CFBP 7177 / CIP 109463 / NCPPB 4357 / Et1/99).